A 402-amino-acid chain; its full sequence is Endo-polygalacturonase (402 aa).

The N-terminal stretch at 1–23 (MEYQSGKRVLSLSLGLIGLFSAS) is a signal peptide. 2 disulfide bridges follow: Cys-41–Cys-62 and Cys-115–Cys-125. Asp-249 acts as the Proton donor in catalysis. Residue His-277 is part of the active site.

This sequence belongs to the glycosyl hydrolase 28 family. As to quaternary structure, monomer.

The protein resides in the secreted. The catalysed reaction is (1,4-alpha-D-galacturonosyl)n+m + H2O = (1,4-alpha-D-galacturonosyl)n + (1,4-alpha-D-galacturonosyl)m.. Functionally, involved in maceration and soft-rotting of plant tissue. This is Endo-polygalacturonase (pehA) from Pectobacterium parmentieri.